A 243-amino-acid polypeptide reads, in one-letter code: UPF0702 transmembrane protein YkjA (243 aa).

A run of 3 helical transmembrane segments spans residues 3–23 (WMVW…YILF), 34–54 (MNNF…EPIL), and 58–78 (LPMS…MSKL).

The protein belongs to the UPF0702 family.

Its subcellular location is the cell membrane. The sequence is that of UPF0702 transmembrane protein YkjA (ykjA) from Bacillus subtilis (strain 168).